The sequence spans 245 residues: 5-oxoprolinase subunit A (245 aa).

The protein belongs to the LamB/PxpA family. Forms a complex composed of PxpA, PxpB and PxpC.

It catalyses the reaction 5-oxo-L-proline + ATP + 2 H2O = L-glutamate + ADP + phosphate + H(+). Functionally, catalyzes the cleavage of 5-oxoproline to form L-glutamate coupled to the hydrolysis of ATP to ADP and inorganic phosphate. This is 5-oxoprolinase subunit A from Erwinia tasmaniensis (strain DSM 17950 / CFBP 7177 / CIP 109463 / NCPPB 4357 / Et1/99).